The primary structure comprises 89 residues: Ragulator complex protein LAMTOR5 homolog (89 aa).

This sequence belongs to the LAMTOR5 family. Part of the Ragulator complex.

Its subcellular location is the cytoplasm. It is found in the lysosome. Its function is as follows. Regulator of the TOR pathway, a signaling cascade that promotes cell growth in response to growth factors, energy levels, and amino acids. As part of the Ragulator complex, may activate the TOR signaling cascade in response to amino acids. This chain is Ragulator complex protein LAMTOR5 homolog, found in Dictyostelium discoideum (Social amoeba).